The primary structure comprises 476 residues: AAAAAGRGRSFSPAAPAPSSVRLPGRQAPAPAAASALAVEADPAADRVSSLSQVSGVLGSQWGDEGKGKLVDVLAPRFDIVARCQGGANAGHTIYNSEGKKFALHLVPSGILHEGTLCVVGNGAVIHVPGFFGEIDGLQSNGVSCDGRILVSDRAHLLFDLHQTVDGLREAELANSFIGTTKRGIGPCYSSKVTRNGLRVCDLRHMDTFGDKLDVLFEDAAARFEGFKYSKGMLKEEVERYKRFAERLEPFIADTVHVLNESIRQKKKILVEGGQATMLDIDFGTYPFVTSSSPSAGGICTGLGIAPRVIGDLIGVVKAYTTRVGSGPFPTELLGEEGDVLRKAGMEFGTTTGRPRRCGWLDIVALKYCCDINGFSSLNLTKLDVLSGLPEIKLGVSYNQMDGEKLQSFPGDLDTLEQVQVNYEVLPGWDSDISSVRSYSELPQAARRYVERIEELAGVPVHYIGVGPGRDALIYK.

Over residues 1–20 (AAAAAGRGRSFSPAAPAPSS) the composition is skewed to low complexity. Residues 1–34 (AAAAAGRGRSFSPAAPAPSSVRLPGRQAPAPAAA) form a disordered region. GTP is bound by residues 63-69 (GDEGKGK) and 91-93 (GHT). The active-site Proton acceptor is the Asp64. Mg(2+) contacts are provided by Asp64 and Gly91. Residues 64–67 (DEGK), 89–92 (NAGH), Thr181, Arg195, Gln275, Thr290, and Arg354 contribute to the IMP site. His92 (proton donor) is an active-site residue. 350–356 (TTTGRPR) is a binding site for substrate. GTP-binding positions include Arg356, 382–384 (KLD), and 465–467 (GVG).

The protein belongs to the adenylosuccinate synthetase family. Homodimer. Mg(2+) serves as cofactor.

It is found in the plastid. The protein resides in the chloroplast. It carries out the reaction IMP + L-aspartate + GTP = N(6)-(1,2-dicarboxyethyl)-AMP + GDP + phosphate + 2 H(+). It participates in purine metabolism; AMP biosynthesis via de novo pathway; AMP from IMP: step 1/2. In terms of biological role, plays an important role in the de novo pathway and in the salvage pathway of purine nucleotide biosynthesis. Catalyzes the first committed step in the biosynthesis of AMP from IMP. The chain is Adenylosuccinate synthetase, chloroplastic from Triticum aestivum (Wheat).